A 155-amino-acid chain; its full sequence is Transcriptional repressor NrdR (155 aa).

A zinc finger lies at 3 to 34; it reads CPNCHQNASRVIDSRPTDEGRTIRRRRECENC. One can recognise an ATP-cone domain in the interval 49 to 139; that stretch reads LLVIKNDGTR…IYRQFTDMSS (91 aa).

The protein belongs to the NrdR family. The cofactor is Zn(2+).

In terms of biological role, negatively regulates transcription of bacterial ribonucleotide reductase nrd genes and operons by binding to NrdR-boxes. This chain is Transcriptional repressor NrdR, found in Lactobacillus delbrueckii subsp. bulgaricus (strain ATCC 11842 / DSM 20081 / BCRC 10696 / JCM 1002 / NBRC 13953 / NCIMB 11778 / NCTC 12712 / WDCM 00102 / Lb 14).